Consider the following 381-residue polypeptide: Probable G-protein coupled receptor 34 (381 aa).

At 1-61 (MRSHTITMTT…LLSTVLTTSY (61 aa)) the chain is on the extracellular side. 3 N-linked (GlcNAc...) asparagine glycosylation sites follow: asparagine 28, asparagine 36, and asparagine 42. The helical transmembrane segment at 62–82 (SVIFIVGLVGNIIALYVFLGI) threads the bilayer. The Cytoplasmic segment spans residues 83-88 (HRKRNS). A helical membrane pass occupies residues 89-109 (IQIYLLNVAIADLLLIFCLPF). Topologically, residues 110-128 (RIMYHINQNKWTLGVILCK) are extracellular. Cysteine 127 and cysteine 204 form a disulfide bridge. The helical transmembrane segment at 129–149 (VVGTLFYMNMYISIILLGFIS) threads the bilayer. Over 150 to 171 (LDRYIKINRSIQQRKAITTKQS) the chain is Cytoplasmic. A helical transmembrane segment spans residues 172-192 (IYVCCIVWMLALGGFLTMIIL). At 193–216 (TLKKGGHNSTMCFHYRDKHNAKGE) the chain is on the extracellular side. An N-linked (GlcNAc...) asparagine glycan is attached at asparagine 200. The chain crosses the membrane as a helical span at residues 217 to 237 (AIFNFILVVMFWLIFLLIILS). At 238-269 (YIKIGKNLLRISKRRSKFPNSGKYATTARNSF) the chain is on the cytoplasmic side. The helical transmembrane segment at 270-290 (IVLIIFTICFVPYHAFRFIYI) threads the bilayer. Residues 291–310 (SSQLNVSSCYWKEIVHKTNE) lie on the Extracellular side of the membrane. Asparagine 295 is a glycosylation site (N-linked (GlcNAc...) asparagine). Residues 311 to 331 (IMLVLSSFNSCLDPVMYFLMS) form a helical membrane-spanning segment. The Cytoplasmic segment spans residues 332 to 381 (SNIRKIMCQLLFRRFQGEPSRSESTSEFKPGYSLHDTSVAVKIQSSSKST).

Belongs to the G-protein coupled receptor 1 family.

It is found in the cell membrane. Functionally, G-protein-coupled receptor of lysophosphatidylserine (LysoPS) that plays different roles in immune response. Acts a damage-sensing receptor that triggers tissue repair upon recognition of dying neutrophils. Mechanistically, apoptotic neutrophils release lysophosphatydilserine that are recognized by type 3 innate lymphoid cells (ILC3s) via GPR34, which activates downstream PI3K-AKT and RAS-ERK signaling pathways leading to STAT3 activation and IL-22 production. Plays an important role in microglial function, controlling morphology and phagocytosis. In Gorilla gorilla gorilla (Western lowland gorilla), this protein is Probable G-protein coupled receptor 34 (GPR34).